A 386-amino-acid chain; its full sequence is Convicilin (386 aa).

The N-terminal stretch at 1 to 29 is a signal peptide; that stretch reads MATTIKSRFPLLLLLGIIFLASVVSVTYA. Residues 33 to 199 are disordered; it reads EGSEPRVPAQ…EERSSESQER (167 aa). Basic and acidic residues-rich tracts occupy residues 41-65, 74-91, 104-144, and 153-186; these read AQRE…PSYE, QRER…RHGE, EKQK…RWER, and EEWR…HQRE. The region spanning 202–359 is the Cupin type-1 domain; it reads PFLFKSNKFL…SYNTRYETIE (158 aa). Residues 367–386 are disordered; the sequence is EKDRKRRQQGEETDAIVKVS.

Belongs to the 7S seed storage protein family.

The protein localises to the vacuole. The protein resides in the aleurone grain. In terms of biological role, seed storage protein. The sequence is that of Convicilin (CVCB) from Pisum sativum (Garden pea).